The following is a 328-amino-acid chain: Phosphate acyltransferase (328 aa).

The protein belongs to the PlsX family. In terms of assembly, homodimer. Probably interacts with PlsY.

The protein resides in the cytoplasm. The enzyme catalyses a fatty acyl-[ACP] + phosphate = an acyl phosphate + holo-[ACP]. It functions in the pathway lipid metabolism; phospholipid metabolism. Its function is as follows. Catalyzes the reversible formation of acyl-phosphate (acyl-PO(4)) from acyl-[acyl-carrier-protein] (acyl-ACP). This enzyme utilizes acyl-ACP as fatty acyl donor, but not acyl-CoA. In Staphylococcus aureus (strain Mu3 / ATCC 700698), this protein is Phosphate acyltransferase.